The chain runs to 76 residues: Large ribosomal subunit protein bL28 (76 aa).

Belongs to the bacterial ribosomal protein bL28 family.

The protein is Large ribosomal subunit protein bL28 of Opitutus terrae (strain DSM 11246 / JCM 15787 / PB90-1).